A 366-amino-acid polypeptide reads, in one-letter code: Chorismate synthase (366 aa).

Positions 48 and 54 each coordinate NADP(+). FMN is bound by residues 125–127 (RSS), 237–238 (NA), Gly-277, 292–296 (KPTSS), and Arg-318.

This sequence belongs to the chorismate synthase family. As to quaternary structure, homotetramer. The cofactor is FMNH2.

It carries out the reaction 5-O-(1-carboxyvinyl)-3-phosphoshikimate = chorismate + phosphate. Its pathway is metabolic intermediate biosynthesis; chorismate biosynthesis; chorismate from D-erythrose 4-phosphate and phosphoenolpyruvate: step 7/7. Catalyzes the anti-1,4-elimination of the C-3 phosphate and the C-6 proR hydrogen from 5-enolpyruvylshikimate-3-phosphate (EPSP) to yield chorismate, which is the branch point compound that serves as the starting substrate for the three terminal pathways of aromatic amino acid biosynthesis. This reaction introduces a second double bond into the aromatic ring system. This is Chorismate synthase from Acidovorax sp. (strain JS42).